We begin with the raw amino-acid sequence, 38 residues long: Large ribosomal subunit protein bL36 (38 aa).

It belongs to the bacterial ribosomal protein bL36 family.

The sequence is that of Large ribosomal subunit protein bL36 from Wigglesworthia glossinidia brevipalpis.